The sequence spans 218 residues: Protein GrpE (218 aa).

Basic and acidic residues-rich tracts occupy residues 1-13 (MSKN…HQNN) and 20-32 (VDKK…NKQE). Residues 1–32 (MSKNNENIKHQNNDKVNNQVDKKETKNHNKQE) are disordered.

Belongs to the GrpE family. In terms of assembly, homodimer.

The protein resides in the cytoplasm. Participates actively in the response to hyperosmotic and heat shock by preventing the aggregation of stress-denatured proteins, in association with DnaK and GrpE. It is the nucleotide exchange factor for DnaK and may function as a thermosensor. Unfolded proteins bind initially to DnaJ; upon interaction with the DnaJ-bound protein, DnaK hydrolyzes its bound ATP, resulting in the formation of a stable complex. GrpE releases ADP from DnaK; ATP binding to DnaK triggers the release of the substrate protein, thus completing the reaction cycle. Several rounds of ATP-dependent interactions between DnaJ, DnaK and GrpE are required for fully efficient folding. The sequence is that of Protein GrpE from Ureaplasma parvum serovar 3 (strain ATCC 27815 / 27 / NCTC 11736).